We begin with the raw amino-acid sequence, 720 residues long: 1-deoxy-D-xylulose-5-phosphate synthase 1, chloroplastic (720 aa).

Residues 1-51 (MALTTFSISRGGFVGALPQEGHFAPAAAELSLHKLQSRPHKARRRSSSSIS) constitute a chloroplast transit peptide. Basic residues predominate over residues 35 to 46 (LQSRPHKARRRS). Residues 35 to 74 (LQSRPHKARRRSSSSISASLSTEREAAEYHSQRPPTPLLD) are disordered. The segment covering 56–65 (TEREAAEYHS) has biased composition (basic and acidic residues). Thiamine diphosphate-binding positions include His142 and 183–185 (GHS). Residue Asp214 coordinates Mg(2+). Residues 215 to 216 (GA), Asn243, Tyr364, and Glu446 each bind thiamine diphosphate. Asn243 serves as a coordination point for Mg(2+).

The protein belongs to the transketolase family. DXPS subfamily. In terms of assembly, homodimer. The cofactor is Mg(2+). Requires thiamine diphosphate as cofactor.

It is found in the plastid. The protein localises to the chloroplast stroma. The catalysed reaction is D-glyceraldehyde 3-phosphate + pyruvate + H(+) = 1-deoxy-D-xylulose 5-phosphate + CO2. Its pathway is metabolic intermediate biosynthesis; 1-deoxy-D-xylulose 5-phosphate biosynthesis; 1-deoxy-D-xylulose 5-phosphate from D-glyceraldehyde 3-phosphate and pyruvate: step 1/1. Functionally, catalyzes the acyloin condensation reaction between C atoms 2 and 3 of pyruvate and glyceraldehyde 3-phosphate to yield 1-deoxy-D-xylulose-5-phosphate (DXP). Is a limiting enzyme for plastidic isoprenoid biosynthesis and essential for chloroplast development. The chain is 1-deoxy-D-xylulose-5-phosphate synthase 1, chloroplastic (CLA1) from Oryza sativa subsp. japonica (Rice).